We begin with the raw amino-acid sequence, 221 residues long: Catechol O-methyltransferase (221 aa).

Positions 41, 65, 67, 71, 89, 94, 118, and 139 each coordinate S-adenosyl-L-methionine. Positions 139, 165, and 166 each coordinate Mg(2+).

This sequence belongs to the class I-like SAM-binding methyltransferase superfamily. Cation-dependent O-methyltransferase family. In terms of assembly, homodimer. The cofactor is Mg(2+).

The catalysed reaction is a catechol + S-adenosyl-L-methionine = a guaiacol + S-adenosyl-L-homocysteine + H(+). Its activity is regulated as follows. The metal ion affects the meta and para-regiospecificity of the enzyme as well as the enzyme activity and thermal stability. Its function is as follows. Catechol O-methyltransferase that can use various catechol-like compounds. Can produce vanillic acid (meta-form) and iso-vanillic acid (para-form) from protocatechuic acid (PCA). Does not have a regiospecificity, and produces the meta- and para-forms of the products in equal proportion. The protein is Catechol O-methyltransferase of Niastella koreensis (strain DSM 17620 / KACC 11465 / NBRC 106392 / GR20-10).